The primary structure comprises 175 residues: NADH-quinone oxidoreductase subunit I (175 aa).

2 4Fe-4S ferredoxin-type domains span residues 69–98 (KRDE…IEAA) and 115–144 (KKFE…LDGP). [4Fe-4S] cluster is bound by residues cysteine 78, cysteine 81, cysteine 84, cysteine 88, cysteine 124, cysteine 127, cysteine 130, and cysteine 134.

Belongs to the complex I 23 kDa subunit family. In terms of assembly, NDH-1 is composed of 14 different subunits. Subunits NuoA, H, J, K, L, M, N constitute the membrane sector of the complex. The cofactor is [4Fe-4S] cluster.

The protein localises to the cell inner membrane. The catalysed reaction is a quinone + NADH + 5 H(+)(in) = a quinol + NAD(+) + 4 H(+)(out). Functionally, NDH-1 shuttles electrons from NADH, via FMN and iron-sulfur (Fe-S) centers, to quinones in the respiratory chain. The immediate electron acceptor for the enzyme in this species is believed to be ubiquinone. Couples the redox reaction to proton translocation (for every two electrons transferred, four hydrogen ions are translocated across the cytoplasmic membrane), and thus conserves the redox energy in a proton gradient. In Leptospira interrogans serogroup Icterohaemorrhagiae serovar Lai (strain 56601), this protein is NADH-quinone oxidoreductase subunit I.